The primary structure comprises 843 residues: Molybdenum cofactor sulfurase (843 aa).

Position 241 is an N6-(pyridoxal phosphate)lysine (Lys241). Residue Cys405 is part of the active site. Positions 657 to 836 constitute an MOSC domain; sequence QYLRKFVMPG…LMVGDIVIPS (180 aa).

This sequence belongs to the class-V pyridoxal-phosphate-dependent aminotransferase family. MOCOS subfamily. The cofactor is pyridoxal 5'-phosphate.

It catalyses the reaction Mo-molybdopterin + L-cysteine + AH2 = thio-Mo-molybdopterin + L-alanine + A + H2O. Sulfurates the molybdenum cofactor. Sulfation of molybdenum is essential for xanthine dehydrogenase (XDH) and aldehyde oxidase (ADO) enzymes in which molybdenum cofactor is liganded by 1 oxygen and 1 sulfur atom in active form. This is Molybdenum cofactor sulfurase from Aspergillus fumigatus (strain CBS 144.89 / FGSC A1163 / CEA10) (Neosartorya fumigata).